Reading from the N-terminus, the 283-residue chain is MPHRKERPSGSSLHTHGSTGTAEGGNMSRLSLTRSPVSPLAAQGIPLPAQLTKSNAPVHIDVGGHMYTSSLATLTKYPDSRISRLFNGTEPIVLDSLKQHYFIDRDGEIFRYVLSFLRTSKLLLPDDFKDFSLLYEEARYYQLQPMVRELERWQQEQEQRRRSRACDCLVVRVTPDLGERIALSGEKALIEEVFPETGDVMCNSVNAGWNQDPTHVIRFPLNGYCRLNSVQVLERLFQRGFSVAASCGGGVDSSQFSEYVLCREERRPQPTPTAVRIKQEPLD.

Residues 1–32 form a disordered region; sequence MPHRKERPSGSSLHTHGSTGTAEGGNMSRLSL. Residues 9 to 21 are compositionally biased toward low complexity; it reads SGSSLHTHGSTGT. Phosphoserine occurs at positions 31, 35, and 38. One can recognise a BTB domain in the interval 56-126; it reads APVHIDVGGH…LRTSKLLLPD (71 aa).

As to quaternary structure, forms oligomers, predominantly homopentamers. Interacts with KCTD1, probably forming heteropentamers depending on its abundance in a cell-type dependent manner. Interacts with TFAP2A; this interaction inhibits TFAP2A transcriptional activation.

It is found in the nucleus. During embryonic development, it is involved in neural crest formation. Inhibits AP2 transcriptional activity by interaction with its activation domain. This is BTB/POZ domain-containing protein KCTD15 (KCTD15) from Homo sapiens (Human).